Here is a 404-residue protein sequence, read N- to C-terminus: Probable tRNA sulfurtransferase (404 aa).

A THUMP domain is found at 61-166 (EAVSERLKDV…SGYSYIMCDE (106 aa)). Residues 184-185 (LL), 209-210 (HF), arginine 266, glycine 288, and glutamine 297 each bind ATP.

The protein belongs to the ThiI family.

The protein localises to the cytoplasm. It carries out the reaction [ThiI sulfur-carrier protein]-S-sulfanyl-L-cysteine + a uridine in tRNA + 2 reduced [2Fe-2S]-[ferredoxin] + ATP + H(+) = [ThiI sulfur-carrier protein]-L-cysteine + a 4-thiouridine in tRNA + 2 oxidized [2Fe-2S]-[ferredoxin] + AMP + diphosphate. The catalysed reaction is [ThiS sulfur-carrier protein]-C-terminal Gly-Gly-AMP + S-sulfanyl-L-cysteinyl-[cysteine desulfurase] + AH2 = [ThiS sulfur-carrier protein]-C-terminal-Gly-aminoethanethioate + L-cysteinyl-[cysteine desulfurase] + A + AMP + 2 H(+). It participates in cofactor biosynthesis; thiamine diphosphate biosynthesis. Catalyzes the ATP-dependent transfer of a sulfur to tRNA to produce 4-thiouridine in position 8 of tRNAs, which functions as a near-UV photosensor. Also catalyzes the transfer of sulfur to the sulfur carrier protein ThiS, forming ThiS-thiocarboxylate. This is a step in the synthesis of thiazole, in the thiamine biosynthesis pathway. The sulfur is donated as persulfide by IscS. This is Probable tRNA sulfurtransferase from Bacillus cereus (strain ATCC 14579 / DSM 31 / CCUG 7414 / JCM 2152 / NBRC 15305 / NCIMB 9373 / NCTC 2599 / NRRL B-3711).